Consider the following 263-residue polypeptide: Putative alpha/beta hydrolase L404 (263 aa).

Residue Gly-2 is the site of N-myristoyl glycine; by host attachment.

This sequence belongs to the AB hydrolase superfamily.

The polypeptide is Putative alpha/beta hydrolase L404 (Acanthamoeba polyphaga (Amoeba)).